Here is a 116-residue protein sequence, read N- to C-terminus: Large ribosomal subunit protein bL19 (116 aa).

The protein belongs to the bacterial ribosomal protein bL19 family.

Functionally, this protein is located at the 30S-50S ribosomal subunit interface and may play a role in the structure and function of the aminoacyl-tRNA binding site. The protein is Large ribosomal subunit protein bL19 of Pseudomonas fluorescens (strain ATCC BAA-477 / NRRL B-23932 / Pf-5).